A 260-amino-acid chain; its full sequence is Adenosylcobinamide-GDP ribazoletransferase (260 aa).

The next 6 helical transmembrane spans lie at 40-60 (AFPF…LLLL), 64-84 (ADPL…TGAL), 117-137 (YGAI…AVIA), 142-162 (PLTA…AIAW), 188-208 (QFAL…AFGL), and 209-229 (RPLV…TAFI).

Belongs to the CobS family. Mg(2+) is required as a cofactor.

The protein resides in the cell inner membrane. The enzyme catalyses alpha-ribazole + adenosylcob(III)inamide-GDP = adenosylcob(III)alamin + GMP + H(+). The catalysed reaction is alpha-ribazole 5'-phosphate + adenosylcob(III)inamide-GDP = adenosylcob(III)alamin 5'-phosphate + GMP + H(+). The protein operates within cofactor biosynthesis; adenosylcobalamin biosynthesis; adenosylcobalamin from cob(II)yrinate a,c-diamide: step 7/7. Joins adenosylcobinamide-GDP and alpha-ribazole to generate adenosylcobalamin (Ado-cobalamin). Also synthesizes adenosylcobalamin 5'-phosphate from adenosylcobinamide-GDP and alpha-ribazole 5'-phosphate. The chain is Adenosylcobinamide-GDP ribazoletransferase from Rhizobium johnstonii (strain DSM 114642 / LMG 32736 / 3841) (Rhizobium leguminosarum bv. viciae).